A 95-amino-acid chain; its full sequence is Large ribosomal subunit protein bL21 (95 aa).

The protein belongs to the bacterial ribosomal protein bL21 family. In terms of assembly, part of the 50S ribosomal subunit. Contacts protein L20.

Functionally, this protein binds to 23S rRNA in the presence of protein L20. This Chlorobaculum tepidum (strain ATCC 49652 / DSM 12025 / NBRC 103806 / TLS) (Chlorobium tepidum) protein is Large ribosomal subunit protein bL21.